The following is a 2568-amino-acid chain: Highly reducing polyketide synthase resH (2568 aa).

Residues 9-437 form the Ketosynthase family 3 (KS3) domain; sequence PEPIAIVGMA…GANAHAILDA (429 aa). Active-site for beta-ketoacyl synthase activity residues include Cys-184, His-319, and His-359. In terms of domain architecture, Malonyl-CoA:ACP transacylase (MAT) spans 549–877; that stretch reads FIFTGQGAQW…KLAGSLFLSG (329 aa). An N-terminal hotdog fold region spans residues 942-1081; that stretch reads HDLLGSRLPG…TNDQLLWPDD (140 aa). Residues 942 to 1244 form the PKS/mFAS DH domain; the sequence is HDLLGSRLPG…FSSLETASSD (303 aa). Residue His-974 is the Proton acceptor; for dehydratase activity of the active site. The C-terminal hotdog fold stretch occupies residues 1091-1244; the sequence is NKDSYDRRWY…FSSLETASSD (154 aa). Asp-1156 (proton donor; for dehydratase activity) is an active-site residue. Positions 1295–1595 are methyltransferase (CMet) domain; the sequence is VTRLAIRSSA…SGADVVLDDY (301 aa). Residues 1853–2154 enclose the Enoyl reductase (ER) domain; that stretch reads GRLDSFYFKE…QEDSVGLAVL (302 aa). A Ketoreductase (KR) domain is found at 2177–2357; that stretch reads ASYLLIGCLG…QATSIALGMI (181 aa). Residues 2485–2563 form the Carrier domain; sequence AVKSAILGLI…GLADQVVSLA (79 aa). Ser-2522 bears the O-(pantetheine 4'-phosphoryl)serine mark.

The cofactor is pantetheine 4'-phosphate.

The protein operates within antifungal biosynthesis. Functionally, highly reducing polyketide synthase; part of the gene cluster that mediates the biosynthesis of the tetrahydropyranyl antifungal agent restricticin that acts as an inhibitor of CYP51 and blocks the ergosterol biosynthesis. The highly reducing polyketide synthase resH, the short chain dehydrogenase resG, the cyclase resF, the FAD-dependent monooxygenase resA and the enoylreductase resD are required to generate the first stable intermediate desmethylrestrictinol. ResH with resD biosynthesize the first polyketide chain intermediate that is reduced by resG, followed by epoxidation by resA before 6-endo cyclization via epoxide opening by resF leads to desmethylrestrictinol. The methyltransferase resE then catalyzes the C4 O-methylation of desmethylrestrictinol to produce restrictinol, and the nonribosomal peptide synthetase resC catalyzes the C3 esterification of restrictinol with glycine that leads to restricticin. In Aspergillus sclerotiorum, this protein is Highly reducing polyketide synthase resH.